We begin with the raw amino-acid sequence, 250 residues long: NAD(P)H-quinone oxidoreductase subunit S, chloroplastic (250 aa).

A chloroplast-targeting transit peptide spans 1 to 48 (MATSSITIPTIRTPIHRSKFLGQTHQFSTVNRSVFPPPKQQSKLYQVK). Lysine 52 is covalently cross-linked (Glycyl lysine isopeptide (Lys-Gly) (interchain with G-Cter in ubiquitin)). 2 stretches are compositionally biased toward basic and acidic residues: residues 76 to 94 (QRNI…NETE) and 106 to 115 (VPEDGFEKEM). Disordered stretches follow at residues 76 to 163 (QRNI…KPKA) and 222 to 250 (REKG…EAAP). The segment covering 136–146 (NPPPPPPPPPA) has biased composition (pro residues).

Part of the chloroplast NDH complex, composed of a mixture of chloroplast and nucleus encoded subunits. Component of the electron donor-binding subcomplex, at least composed of NDHS, NDHT and NDHU. Interacts with the NDH subcomplex A via the protein NDHT and NDHU. In terms of processing, arg-193 is the critical site for the high affinity binding of NDH to ferredoxin.

The protein resides in the plastid. It localises to the chloroplast thylakoid membrane. The enzyme catalyses a plastoquinone + NADH + (n+1) H(+)(in) = a plastoquinol + NAD(+) + n H(+)(out). It carries out the reaction a plastoquinone + NADPH + (n+1) H(+)(in) = a plastoquinol + NADP(+) + n H(+)(out). NDH shuttles electrons from NAD(P)H:plastoquinone, via FMN and iron-sulfur (Fe-S) centers, to quinones in the photosynthetic chain and possibly in a chloroplast respiratory chain. The immediate electron acceptor for the enzyme in this species is believed to be plastoquinone. Couples the redox reaction to proton translocation, and thus conserves the redox energy in a proton gradient. Required for the efficient operation of ferredoxin-dependent plastoquinone reduction. Forms the electron donor-binding subcomplex in association with the NDHT and NDHU subunits. The polypeptide is NAD(P)H-quinone oxidoreductase subunit S, chloroplastic (Arabidopsis thaliana (Mouse-ear cress)).